We begin with the raw amino-acid sequence, 1171 residues long: Pyruvate:ferredoxin oxidoreductase (1171 aa).

Positions 29 and 112 each coordinate pyruvate. Residues 424–428, Lys456, Asn556, and Asn598 each bind CoA; that span reads SDGTV. 4Fe-4S ferredoxin-type domains are found at residues 677-706 and 733-764; these read NIPQ…PYLA and FRIQ…MVPL. Residues Cys686, Cys689, Cys692, Cys696, Cys742, Cys745, Cys748, Cys752, Cys809, and Cys812 each contribute to the [4Fe-4S] cluster site. Thiamine diphosphate-binding positions include Glu814, Cys837, 967–969, and 995–1000; these read DGW and TEVYSN. Cys837 contacts [4Fe-4S] cluster. Residues Asp967, Thr995, and Val997 each coordinate Mg(2+). Asn1000 contributes to the pyruvate binding site. Cys1075 is a binding site for [4Fe-4S] cluster.

Belongs to the pyruvate:ferredoxin/flavodoxin oxidoreductase family. Homodimer. Requires [4Fe-4S] cluster as cofactor. The cofactor is thiamine diphosphate. Mg(2+) serves as cofactor.

It catalyses the reaction 2 oxidized [2Fe-2S]-[ferredoxin] + pyruvate + CoA = 2 reduced [2Fe-2S]-[ferredoxin] + acetyl-CoA + CO2 + H(+). Catalyzes the oxidative decarboxylation of pyruvate to acetyl-CoA and carbon dioxide. The two electrons that are generated as a result of pyruvate decarboxylation are used in the reduction of low potential ferredoxins, which provide reducing equivalents for central metabolism. Also catalyzes the reverse reaction, i.e. the synthesis of pyruvate from acetyl-CoA and carbon dioxide. Appears to function physiologically in both directions. The oxidation of pyruvate by PFOR is required to connect glycolysis and the Wood-Ljungdahl pathway of reductive acetogenesis. The conversion of acetyl-CoA to pyruvate links the Wood-Ljungdahl pathway of autotrophic CO2 fixation to the reductive tricarboxylic acid cycle. Can use methyl viologen as electron carrier in vitro. The polypeptide is Pyruvate:ferredoxin oxidoreductase (Moorella thermoacetica (strain ATCC 39073 / JCM 9320)).